Consider the following 409-residue polypeptide: MHAWPASEVPALPGQGRDLRIHDTATGGPVTLDPGPVARIYVCGITPYDATHMGHAATYNAFDLVQRVWLDTKRQVHYVQNVTDVDDPLLERAVRDGVDWTALAEQETALFREDMTALRMLPPQHYIGAVEAIPGIVPLVERLRDAGAAYELEGDVYFSVEADPHFGGVSHLDAATMRLLSAERGGDPDRPGKKNPLDPMLWMAAREGEPSWDGGTLGRGRPGWHIECVAIALDHLGMGFDVQGGGSDLAFPHHEMGASHAQALTGEFPMAKAYVHAGMVGLDGEKMSKSKGNLVFVSQLRREGVDPAAIRLTLLAHHYRSDWEWTDQVLQDALARLDRWRAAVSRPDGPPAEALVEEIREALANDLDSPAALAAVDRWAALQQESGGTDIGAPGVVSRAVDALLGVAL.

A disordered region spans residues 1–27; that stretch reads MHAWPASEVPALPGQGRDLRIHDTATG. A Zn(2+)-binding site is contributed by Cys43. L-cysteinyl-5'-AMP-binding positions include 43–46, Thr58, and 81–83; these read CGIT and NVT. Residues 45 to 55 carry the 'HIGH' region motif; sequence ITPYDATHMGH. Residues 183–188 carry the 'ERGGDP' region motif; sequence ERGGDP. Trp224 serves as a coordination point for L-cysteinyl-5'-AMP. Cys228 serves as a coordination point for Zn(2+). 246-248 is a binding site for L-cysteinyl-5'-AMP; sequence GSD. His253 provides a ligand contact to Zn(2+). Val280 serves as a coordination point for L-cysteinyl-5'-AMP. The 'KMSKS' region signature appears at 286–290; sequence KMSKS.

It belongs to the class-I aminoacyl-tRNA synthetase family. MshC subfamily. Monomer. The cofactor is Zn(2+).

It carries out the reaction 1D-myo-inositol 2-amino-2-deoxy-alpha-D-glucopyranoside + L-cysteine + ATP = 1D-myo-inositol 2-(L-cysteinylamino)-2-deoxy-alpha-D-glucopyranoside + AMP + diphosphate + H(+). In terms of biological role, catalyzes the ATP-dependent condensation of GlcN-Ins and L-cysteine to form L-Cys-GlcN-Ins. The chain is L-cysteine:1D-myo-inositol 2-amino-2-deoxy-alpha-D-glucopyranoside ligase (mshC) from Streptomyces coelicolor (strain ATCC BAA-471 / A3(2) / M145).